We begin with the raw amino-acid sequence, 187 residues long: PsbQ-like protein 3, chloroplastic (187 aa).

Residues 1 to 32 (MAISKPPPLHFTFFHNQDSSIDTSDSNLALSI) constitute a chloroplast transit peptide. The transit peptide at 33–60 (DTSRRRRDVLLTISGTLIPQLFFFDRKR) directs the protein to the thylakoid.

Belongs to the PsbQ family. Subunit of the lumenal protuberance of the NDH complex.

It localises to the plastid. The protein localises to the chloroplast thylakoid membrane. Its function is as follows. Required for both formation and activity of the chloroplast NAD(P)H dehydrogenase (NDH) complex. The protein is PsbQ-like protein 3, chloroplastic (PQL3) of Arabidopsis thaliana (Mouse-ear cress).